A 354-amino-acid polypeptide reads, in one-letter code: Uroporphyrinogen decarboxylase (354 aa).

Substrate contacts are provided by residues 27-31, Asp-77, Tyr-154, Ser-209, and His-327; that span reads RQAGR.

The protein belongs to the uroporphyrinogen decarboxylase family. As to quaternary structure, homodimer.

The protein resides in the cytoplasm. It catalyses the reaction uroporphyrinogen III + 4 H(+) = coproporphyrinogen III + 4 CO2. It participates in porphyrin-containing compound metabolism; protoporphyrin-IX biosynthesis; coproporphyrinogen-III from 5-aminolevulinate: step 4/4. Catalyzes the decarboxylation of four acetate groups of uroporphyrinogen-III to yield coproporphyrinogen-III. This is Uroporphyrinogen decarboxylase from Shewanella halifaxensis (strain HAW-EB4).